Reading from the N-terminus, the 547-residue chain is Inactive delta-guaiene synthase (547 aa).

Positions 299, 303, and 444 each coordinate Mg(2+). The short motif at 299–303 (DDTYD) is the DDXXD motif element.

Belongs to the terpene synthase family. Requires Mg(2+) as cofactor.

This Aquilaria crassna (Eagle wood) protein is Inactive delta-guaiene synthase (C1).